The sequence spans 71 residues: MKTQFIVLIVAIVFLQLLSQSEAIFSAIAGLLSNLLGKRDLRHLDLDQFDDMFDQPEISAADMKFLQDLLR.

A signal peptide spans 1–23 (MKTQFIVLIVAIVFLQLLSQSEA). Position 36 is a leucine amide (Leu36). Positions 40–71 (DLRHLDLDQFDDMFDQPEISAADMKFLQDLLR) are excised as a propeptide.

It belongs to the non-disulfide-bridged peptide (NDBP) superfamily. Short antimicrobial peptide (group 4) family. Expressed by the venom gland.

It is found in the secreted. The protein localises to the target cell membrane. In terms of biological role, antimicrobial peptide. Is active on Mycobacterium abscessus subsp. massiliense (MBC=200 uM), a rapidly growing and emerging pathogen associated with healthcare infections. Also shows antifungal activities. Has a weak hemolytic activity on human erythrocytes (10% at 610 uM), indicating a low toxicity (therapeutic index (TI)=3.05). In addition, treatment of infected macrophages reduces the bacterial load. In vivo, treatment of M.abscessus-infected mice causes a decrease in the bacterial load in the lungs and liver. This Hoffmannihadrurus gertschi (Scorpion) protein is Non-disulfide-bridged peptide 5.5.